Consider the following 661-residue polypeptide: Cyclic di-GMP phosphodiesterase PdeR (661 aa).

The PAS domain maps to 109 to 179 (GLSFAEQVVS…RRNNRVFFRS (71 aa)). Residues 265-397 (NKVGVVYLDL…GRGQFCVFTP (133 aa)) enclose the GGDEF domain. Residues 406-658 (YLWLDTNLRK…AFERWYKRYL (253 aa)) form the EAL domain.

As to quaternary structure, interacts with DgcM and MlrA.

The catalysed reaction is 3',3'-c-di-GMP + H2O = 5'-phosphoguanylyl(3'-&gt;5')guanosine + H(+). In terms of biological role, part of a signaling cascade that regulates curli biosynthesis. The cascade is composed of two cyclic-di-GMP (c-di-GMP) control modules, in which c-di-GMP controlled by the DgcE/PdeH pair (module I) regulates the activity of the DgcM/PdeR pair (module II), which in turn regulates activity of the transcription factor MlrA and expression of the master biofilm regulator csgD. PdeR acts as a trigger enzyme that connects modules I and II. It inhibits DgcM and MlrA by direct interaction. Inhibition is relieved when PdeR binds and degrades c-di-GMP generated by module I. The protein is Cyclic di-GMP phosphodiesterase PdeR of Escherichia coli (strain K12).